The chain runs to 596 residues: Elongation factor 4 (596 aa).

A tr-type G domain is found at 2–183 (KNIRNFSIIA…AIVRRVPAPD (182 aa)). GTP is bound by residues 14–19 (DHGKST) and 130–133 (NKID).

This sequence belongs to the TRAFAC class translation factor GTPase superfamily. Classic translation factor GTPase family. LepA subfamily.

The protein resides in the cell inner membrane. The catalysed reaction is GTP + H2O = GDP + phosphate + H(+). Its function is as follows. Required for accurate and efficient protein synthesis under certain stress conditions. May act as a fidelity factor of the translation reaction, by catalyzing a one-codon backward translocation of tRNAs on improperly translocated ribosomes. Back-translocation proceeds from a post-translocation (POST) complex to a pre-translocation (PRE) complex, thus giving elongation factor G a second chance to translocate the tRNAs correctly. Binds to ribosomes in a GTP-dependent manner. This chain is Elongation factor 4, found in Campylobacter curvus (strain 525.92).